The primary structure comprises 421 residues: Exopolysaccharide production protein ExoF (421 aa).

The N-terminal stretch at 1-31 (MQSNRRSGKSAGSRMVSCFTRLALLAALAAS) is a signal peptide.

Its subcellular location is the periplasm. The protein operates within glycan metabolism; exopolysaccharide biosynthesis. Its function is as follows. Involved in succinoglycan (EPS I) synthesis. Needed for the addition of the first sugar (galactose) to the isoprenoid carrier. This is Exopolysaccharide production protein ExoF (exoF) from Rhizobium meliloti (strain 1021) (Ensifer meliloti).